We begin with the raw amino-acid sequence, 1455 residues long: DNA polymerase II large subunit (1455 aa).

The segment at 1409–1440 is disordered; sequence GLLENLSNGSKKTEKAEKAEKPRKKSDEKPKK. Over residues 1419–1438 the composition is skewed to basic and acidic residues; that stretch reads KKTEKAEKAEKPRKKSDEKP.

This sequence belongs to the archaeal DNA polymerase II family. Heterodimer of a large subunit and a small subunit. In terms of processing, this protein undergoes a protein self splicing that involves a post-translational excision of the intervening region (intein) followed by peptide ligation.

It catalyses the reaction DNA(n) + a 2'-deoxyribonucleoside 5'-triphosphate = DNA(n+1) + diphosphate. The catalysed reaction is Exonucleolytic cleavage in the 3'- to 5'-direction to yield nucleoside 5'-phosphates.. In terms of biological role, possesses two activities: a DNA synthesis (polymerase) and an exonucleolytic activity that degrades single-stranded DNA in the 3'- to 5'-direction. Has a template-primer preference which is characteristic of a replicative DNA polymerase. The protein is DNA polymerase II large subunit (polC) of Pyrococcus abyssi (strain GE5 / Orsay).